The chain runs to 295 residues: Probable endonuclease 4 (295 aa).

Zn(2+)-binding residues include histidine 78, histidine 118, glutamate 154, aspartate 188, histidine 191, histidine 225, aspartate 238, histidine 240, and glutamate 270.

Belongs to the AP endonuclease 2 family. The cofactor is Zn(2+).

It catalyses the reaction Endonucleolytic cleavage to 5'-phosphooligonucleotide end-products.. Endonuclease IV plays a role in DNA repair. It cleaves phosphodiester bonds at apurinic or apyrimidinic (AP) sites, generating a 3'-hydroxyl group and a 5'-terminal sugar phosphate. The sequence is that of Probable endonuclease 4 from Vibrio parahaemolyticus serotype O3:K6 (strain RIMD 2210633).